We begin with the raw amino-acid sequence, 2148 residues long: Polyketide synthase 1 (2148 aa).

Residues 19-261 (FIFGDQSSCN…TPLAVHAPYH (243 aa)) form an N-terminal acylcarrier protein transacylase domain (SAT) region. The 436-residue stretch at 394-829 (ESKIAIIGMS…GGNTALLVED (436 aa)) folds into the Ketosynthase family 3 (KS3) domain. Residues Cys-566, His-701, and His-745 each act as for beta-ketoacyl synthase activity in the active site. Residues 929–1233 (AFVFSGQGSQ…PSLMRNKDGW (305 aa)) are malonyl-CoA:ACP transacylase (MAT) domain. The active-site For acyl/malonyl transferase activity is Ser-1018. Positions 1310 to 1624 (TASVHRIVHE…RKVLNTAMPP (315 aa)) are product template (PT) domain. The N-terminal hotdog fold stretch occupies residues 1314 to 1447 (HRIVHESVDK…SSLHFEQPKV (134 aa)). The 306-residue stretch at 1314–1619 (HRIVHESVDK…FQGIPRKVLN (306 aa)) folds into the PKS/mFAS DH domain. The Proton acceptor; for dehydratase activity role is filled by His-1346. The C-terminal hotdog fold stretch occupies residues 1474–1619 (LNSRMSSGVI…FQGIPRKVLN (146 aa)). The active-site Proton donor; for dehydratase activity is the Asp-1533. A disordered region spans residues 1619 to 1657 (NTAMPPPKSQNEAPVRSAPAKPAAKPPKSASSEHSGHFA). The segment covering 1635–1650 (SAPAKPAAKPPKSASS) has biased composition (low complexity). One can recognise a Carrier 1 domain in the interval 1678–1752 (RNPMLAVFKI…DLATHLGLDT (75 aa)). Ser-1712 bears the O-(pantetheine 4'-phosphoryl)serine mark. A compositionally biased stretch (low complexity) spans 1755–1790 (SDQSSGQSSSSGGLSPRSDSIGEITSSATTPPSLSP). A disordered region spans residues 1755–1796 (SDQSSGQSSSSGGLSPRSDSIGEITSSATTPPSLSPRGSVSG). The region spanning 1793–1870 (SVSGSQCKDV…SFKHMFQQGH (78 aa)) is the Carrier 2 domain. The residue at position 1830 (Ser-1830) is an O-(pantetheine 4'-phosphoryl)serine. The segment at 1882 to 2146 (LKQYRATSTL…ERVAAFIRST (265 aa)) is thioesterase (TE) domain. Ser-1973 (for thioesterase activity) is an active-site residue.

Its function is as follows. Polyketide synthase; part of the Pks1 gene cluster that mediates the biosynthesis of an anthraquinone derivative pigment that contributes to conidial pigmentation that provides protection from UV radiation, heat and cold stress. The polyketide synthase Pks1 produces 1-acetyl-2,4,6,8-tetrahydroxy-9,10-anthraquinone though condensation of acetyl-CoA with malonyl-CoA. The dehydratase EthD and the laccase Mlac1 further convert the anthraquinone derivative into the final conidial pigment. The polypeptide is Polyketide synthase 1 (Metarhizium guizhouense (strain ARSEF 977)).